Here is a 310-residue protein sequence, read N- to C-terminus: Lipoyl synthase (310 aa).

[4Fe-4S] cluster is bound by residues Cys-61, Cys-66, Cys-72, Cys-87, Cys-91, Cys-94, and Ser-300. Residues 73 to 289 (FNNGTATFMI…EYIALSLGFS (217 aa)) enclose the Radical SAM core domain.

Belongs to the radical SAM superfamily. Lipoyl synthase family. [4Fe-4S] cluster serves as cofactor.

It is found in the cytoplasm. It carries out the reaction [[Fe-S] cluster scaffold protein carrying a second [4Fe-4S](2+) cluster] + N(6)-octanoyl-L-lysyl-[protein] + 2 oxidized [2Fe-2S]-[ferredoxin] + 2 S-adenosyl-L-methionine + 4 H(+) = [[Fe-S] cluster scaffold protein] + N(6)-[(R)-dihydrolipoyl]-L-lysyl-[protein] + 4 Fe(3+) + 2 hydrogen sulfide + 2 5'-deoxyadenosine + 2 L-methionine + 2 reduced [2Fe-2S]-[ferredoxin]. It functions in the pathway protein modification; protein lipoylation via endogenous pathway; protein N(6)-(lipoyl)lysine from octanoyl-[acyl-carrier-protein]: step 2/2. Catalyzes the radical-mediated insertion of two sulfur atoms into the C-6 and C-8 positions of the octanoyl moiety bound to the lipoyl domains of lipoate-dependent enzymes, thereby converting the octanoylated domains into lipoylated derivatives. This chain is Lipoyl synthase, found in Buchnera aphidicola subsp. Cinara cedri (strain Cc).